We begin with the raw amino-acid sequence, 105 residues long: Protein SMALL AUXIN UP-REGULATED RNA 16 (105 aa).

Belongs to the ARG7 family. As to expression, expressed in etiolated hypocotyls, cotyledons, leaves, flowers and siliques.

It localises to the cell membrane. In terms of biological role, provide a mechanistic link between auxin and plasma membrane H(+)-ATPases (PM H(+)-ATPases, e.g. AHA1 and AHA2), and triggers PM H(+)-ATPases activity by promoting phosphorylation of their C-terminal autoinhibitory domain as a result of PP2C-D subfamily of type 2C phosphatases inhibition, thus leading to the acidification of the apoplast and the facilitation of solutes and water uptake to drive cell expansion. Triggers plant growth probably by promoting cell elongation. Regulates branch angles and bending. The polypeptide is Protein SMALL AUXIN UP-REGULATED RNA 16 (Arabidopsis thaliana (Mouse-ear cress)).